A 219-amino-acid chain; its full sequence is Thiamine-phosphate synthase (219 aa).

Residues 44–48 (QFREK) and Asn-79 each bind 4-amino-2-methyl-5-(diphosphooxymethyl)pyrimidine. Mg(2+) contacts are provided by Asp-80 and Asp-99. Ser-117 serves as a coordination point for 4-amino-2-methyl-5-(diphosphooxymethyl)pyrimidine. 143–145 (TST) is a 2-[(2R,5Z)-2-carboxy-4-methylthiazol-5(2H)-ylidene]ethyl phosphate binding site. Lys-146 lines the 4-amino-2-methyl-5-(diphosphooxymethyl)pyrimidine pocket. 2-[(2R,5Z)-2-carboxy-4-methylthiazol-5(2H)-ylidene]ethyl phosphate contacts are provided by residues Gly-175 and 195 to 196 (IS).

It belongs to the thiamine-phosphate synthase family. Mg(2+) serves as cofactor.

The catalysed reaction is 2-[(2R,5Z)-2-carboxy-4-methylthiazol-5(2H)-ylidene]ethyl phosphate + 4-amino-2-methyl-5-(diphosphooxymethyl)pyrimidine + 2 H(+) = thiamine phosphate + CO2 + diphosphate. It carries out the reaction 2-(2-carboxy-4-methylthiazol-5-yl)ethyl phosphate + 4-amino-2-methyl-5-(diphosphooxymethyl)pyrimidine + 2 H(+) = thiamine phosphate + CO2 + diphosphate. It catalyses the reaction 4-methyl-5-(2-phosphooxyethyl)-thiazole + 4-amino-2-methyl-5-(diphosphooxymethyl)pyrimidine + H(+) = thiamine phosphate + diphosphate. It participates in cofactor biosynthesis; thiamine diphosphate biosynthesis; thiamine phosphate from 4-amino-2-methyl-5-diphosphomethylpyrimidine and 4-methyl-5-(2-phosphoethyl)-thiazole: step 1/1. In terms of biological role, condenses 4-methyl-5-(beta-hydroxyethyl)thiazole monophosphate (THZ-P) and 2-methyl-4-amino-5-hydroxymethyl pyrimidine pyrophosphate (HMP-PP) to form thiamine monophosphate (TMP). The sequence is that of Thiamine-phosphate synthase from Bacillus thuringiensis subsp. konkukian (strain 97-27).